An 842-amino-acid chain; its full sequence is Cation/H(+) antiporter 20 (842 aa).

12 consecutive transmembrane segments (helical) span residues 26-46, 55-75, 86-106, 122-142, 155-175, 193-213, 228-248, 283-303, 320-340, 353-373, 380-400, and 413-433; these read FPLL…LAVL, VIAE…RNMA, MPIL…LVGL, GIAV…AFVI, YAEF…PVLA, MAAA…AVAL, LVSL…LVVI, FATD…GLTI, FVSG…TDVA, LVVV…AVMV, ALTL…VLNI, and AILV…VMAI. The span at 585-595 shows a compositional bias: basic and acidic residues; sequence DHGHSHHHQDG. A disordered region spans residues 585–605; that stretch reads DHGHSHHHQDGGGDGNVPENV.

The protein belongs to the monovalent cation:proton antiporter 2 (CPA2) transporter (TC 2.A.37) family. CHX (TC 2.A.37.4) subfamily. As to expression, expressed in leaves and stems. Preferentially expressed in guards cells.

The protein resides in the endomembrane system. In terms of biological role, operates as a K(+)/H(+) antiporter that maintains K(+) homeostasis in guard cells and could regulate pH. Plays a critical role in osmoregulation through the control of stomates opening. The chain is Cation/H(+) antiporter 20 (CHX20) from Arabidopsis thaliana (Mouse-ear cress).